A 734-amino-acid chain; its full sequence is Photosystem I P700 chlorophyll a apoprotein A2 (734 aa).

The next 8 membrane-spanning stretches (helical) occupy residues 46 to 69 (IFAS…FHVA), 135 to 158 (LYIG…LHLQ), 175 to 199 (LNHH…HVAI), 273 to 291 (IAHH…GHMY), 330 to 353 (LHFQ…QHMY), 369 to 395 (AALY…IFFI), 417 to 439 (AIIS…LYVH), and 517 to 535 (FLVH…LILV). [4Fe-4S] cluster-binding residues include C559 and C568. 2 helical membrane passes run 575–596 (AFYL…YWHW) and 643–665 (LSVW…MFLI). 3 residues coordinate chlorophyll a: H654, M662, and Y670. W671 lines the phylloquinone pocket. Residues 707–727 (VVGLAHFSVGYVFTYAAFLIA) form a helical membrane-spanning segment.

It belongs to the PsaA/PsaB family. The PsaA/B heterodimer binds the P700 chlorophyll special pair and subsequent electron acceptors. PSI consists of a core antenna complex that captures photons, and an electron transfer chain that converts photonic excitation into a charge separation. The eukaryotic PSI reaction center is composed of at least 11 subunits. P700 is a chlorophyll a/chlorophyll a' dimer, A0 is one or more chlorophyll a, A1 is one or both phylloquinones and FX is a shared 4Fe-4S iron-sulfur center. serves as cofactor.

Its subcellular location is the plastid. The protein resides in the chloroplast thylakoid membrane. The catalysed reaction is reduced [plastocyanin] + hnu + oxidized [2Fe-2S]-[ferredoxin] = oxidized [plastocyanin] + reduced [2Fe-2S]-[ferredoxin]. Functionally, psaA and PsaB bind P700, the primary electron donor of photosystem I (PSI), as well as the electron acceptors A0, A1 and FX. PSI is a plastocyanin-ferredoxin oxidoreductase, converting photonic excitation into a charge separation, which transfers an electron from the donor P700 chlorophyll pair to the spectroscopically characterized acceptors A0, A1, FX, FA and FB in turn. Oxidized P700 is reduced on the lumenal side of the thylakoid membrane by plastocyanin. This chain is Photosystem I P700 chlorophyll a apoprotein A2, found in Mesostigma viride (Green alga).